The primary structure comprises 286 residues: Aminoglycoside N(3)-acetyltransferase III (286 aa).

Belongs to the antibiotic N-acetyltransferase family.

It catalyses the reaction a 2-deoxystreptamine antibiotic + acetyl-CoA = an N(3)-acetyl-2-deoxystreptamine antibiotic + CoA + H(+). Functionally, resistance to antibiotics containing the 2-deoxy-streptamine ring including gentamicin, kanamycin, tobramycin, neomycin and apramycin. The chain is Aminoglycoside N(3)-acetyltransferase III (aacC3) from Salmonella sp.